Consider the following 267-residue polypeptide: Hydroxyethylthiazole kinase (267 aa).

Residue M46 participates in substrate binding. Residues R121 and T167 each coordinate ATP. A194 contributes to the substrate binding site.

Belongs to the Thz kinase family. The cofactor is Mg(2+).

It carries out the reaction 5-(2-hydroxyethyl)-4-methylthiazole + ATP = 4-methyl-5-(2-phosphooxyethyl)-thiazole + ADP + H(+). The protein operates within cofactor biosynthesis; thiamine diphosphate biosynthesis; 4-methyl-5-(2-phosphoethyl)-thiazole from 5-(2-hydroxyethyl)-4-methylthiazole: step 1/1. Catalyzes the phosphorylation of the hydroxyl group of 4-methyl-5-beta-hydroxyethylthiazole (THZ). This chain is Hydroxyethylthiazole kinase, found in Rhizobium leguminosarum bv. trifolii (strain WSM2304).